A 325-amino-acid chain; its full sequence is 4-hydroxy-3-methylbut-2-enyl diphosphate reductase (325 aa).

Cys-13 provides a ligand contact to [4Fe-4S] cluster. (2E)-4-hydroxy-3-methylbut-2-enyl diphosphate contacts are provided by His-42 and His-76. Positions 42 and 76 each coordinate dimethylallyl diphosphate. Residues His-42 and His-76 each coordinate isopentenyl diphosphate. Cys-98 contacts [4Fe-4S] cluster. Residue His-126 coordinates (2E)-4-hydroxy-3-methylbut-2-enyl diphosphate. Residue His-126 participates in dimethylallyl diphosphate binding. His-126 is a binding site for isopentenyl diphosphate. The Proton donor role is filled by Glu-128. Thr-169 lines the (2E)-4-hydroxy-3-methylbut-2-enyl diphosphate pocket. Cys-230 contributes to the [4Fe-4S] cluster binding site. Positions 258, 259, 260, and 306 each coordinate (2E)-4-hydroxy-3-methylbut-2-enyl diphosphate. 4 residues coordinate dimethylallyl diphosphate: Ser-258, Ser-259, Asn-260, and Ser-306. Ser-258, Ser-259, Asn-260, and Ser-306 together coordinate isopentenyl diphosphate.

Belongs to the IspH family. [4Fe-4S] cluster serves as cofactor.

The enzyme catalyses isopentenyl diphosphate + 2 oxidized [2Fe-2S]-[ferredoxin] + H2O = (2E)-4-hydroxy-3-methylbut-2-enyl diphosphate + 2 reduced [2Fe-2S]-[ferredoxin] + 2 H(+). The catalysed reaction is dimethylallyl diphosphate + 2 oxidized [2Fe-2S]-[ferredoxin] + H2O = (2E)-4-hydroxy-3-methylbut-2-enyl diphosphate + 2 reduced [2Fe-2S]-[ferredoxin] + 2 H(+). It participates in isoprenoid biosynthesis; dimethylallyl diphosphate biosynthesis; dimethylallyl diphosphate from (2E)-4-hydroxy-3-methylbutenyl diphosphate: step 1/1. It functions in the pathway isoprenoid biosynthesis; isopentenyl diphosphate biosynthesis via DXP pathway; isopentenyl diphosphate from 1-deoxy-D-xylulose 5-phosphate: step 6/6. In terms of biological role, catalyzes the conversion of 1-hydroxy-2-methyl-2-(E)-butenyl 4-diphosphate (HMBPP) into a mixture of isopentenyl diphosphate (IPP) and dimethylallyl diphosphate (DMAPP). Acts in the terminal step of the DOXP/MEP pathway for isoprenoid precursor biosynthesis. This Chlorobium phaeobacteroides (strain BS1) protein is 4-hydroxy-3-methylbut-2-enyl diphosphate reductase.